The chain runs to 148 residues: FAD synthase (148 aa).

ATP contacts are provided by residues 14–15 (VF), 19–22 (HVGH), and Asp-100.

It belongs to the archaeal FAD synthase family. As to quaternary structure, homodimer. It depends on a divalent metal cation as a cofactor.

The enzyme catalyses FMN + ATP + H(+) = FAD + diphosphate. It participates in cofactor biosynthesis; FAD biosynthesis; FAD from FMN: step 1/1. Functionally, catalyzes the transfer of the AMP portion of ATP to flavin mononucleotide (FMN) to produce flavin adenine dinucleotide (FAD) coenzyme. The protein is FAD synthase of Thermococcus sibiricus (strain DSM 12597 / MM 739).